Here is a 313-residue protein sequence, read N- to C-terminus: Ornithine carbamoyltransferase (313 aa).

Carbamoyl phosphate-binding positions include 61–64 (STRT), Q88, R112, and 139–142 (HPCQ). L-ornithine-binding positions include N170, D228, and 232 to 233 (SM). Residues 268 to 269 (CL) and R296 each bind carbamoyl phosphate.

This sequence belongs to the aspartate/ornithine carbamoyltransferase superfamily. OTCase family.

It localises to the cytoplasm. It catalyses the reaction carbamoyl phosphate + L-ornithine = L-citrulline + phosphate + H(+). Its pathway is amino-acid biosynthesis; L-arginine biosynthesis; L-arginine from L-ornithine and carbamoyl phosphate: step 1/3. In terms of biological role, reversibly catalyzes the transfer of the carbamoyl group from carbamoyl phosphate (CP) to the N(epsilon) atom of ornithine (ORN) to produce L-citrulline. The sequence is that of Ornithine carbamoyltransferase from Bordetella parapertussis (strain 12822 / ATCC BAA-587 / NCTC 13253).